A 157-amino-acid chain; its full sequence is NADPH-dependent 7-cyano-7-deazaguanine reductase (157 aa).

Catalysis depends on Cys-55, which acts as the Thioimide intermediate. The active-site Proton donor is Asp-62. Substrate is bound by residues 77–79 (VES) and 96–97 (HE).

It belongs to the GTP cyclohydrolase I family. QueF type 1 subfamily.

It is found in the cytoplasm. It catalyses the reaction 7-aminomethyl-7-carbaguanine + 2 NADP(+) = 7-cyano-7-deazaguanine + 2 NADPH + 3 H(+). It functions in the pathway tRNA modification; tRNA-queuosine biosynthesis. Functionally, catalyzes the NADPH-dependent reduction of 7-cyano-7-deazaguanine (preQ0) to 7-aminomethyl-7-deazaguanine (preQ1). This is NADPH-dependent 7-cyano-7-deazaguanine reductase from Neisseria gonorrhoeae (strain ATCC 700825 / FA 1090).